Reading from the N-terminus, the 296-residue chain is Cleavage and polyadenylation specificity factor subunit 4 (296 aa).

5 consecutive C3H1-type zinc fingers follow at residues 35–63 (KSIA…RHIR), 64–91 (GDRT…HEYD), 92–119 (MTKM…HIDP), 120–147 (QSKV…HLRR), and 149–171 (LCMD…HPHF). The segment at 189–206 (PTCHYCGELGHKANSCKQ) adopts a CCHC-type 1 zinc-finger fold. Positions 222–254 (HSGGHSGGYSGHSGHIEGADDMQSNHHSQPHGP) are disordered. The segment at 266 to 283 (ITCYKCGNKGHYANKCPK) adopts a CCHC-type 2 zinc-finger fold.

As to quaternary structure, component of the cleavage and polyadenylation specificity factor (CPSF) complex, composed of at least Clp, Cpsf73, Cpsf100 and Cpsf160. As to expression, during oogenesis, expression is detected in the germarium, in nurse cells, in the oocyte, and in the somatically derived follicular epithelial cells (at protein level). At oogenesis stage 12, nurse cells degenerate and their content is transferred into the oocyte. In larvae, expressed in all organs and disks (at protein level). In the larval salivary gland, expression is initially confined to cells at the anterior end but later expands throughout the entire gland (at protein level).

The protein resides in the nucleus. Component of the cleavage and polyadenylation specificity factor (CPSF) complex that plays a key role in pre-mRNA 3'-end formation, recognizing the AAUAAA signal sequence and interacting with poly(A) polymerase and other factors to bring about cleavage and poly(A) addition. Has endonuclease activity. Binds RNA polymers with a preference for G- and/or C-rich clusters. Binds single-stranded DNA non-specifically. This chain is Cleavage and polyadenylation specificity factor subunit 4 (Clp), found in Drosophila melanogaster (Fruit fly).